The following is a 211-amino-acid chain: uncharacterized protein (211 aa).

Positions 105-143 (IEENEFDKVRKSSDKLINEIEKTKSSLREDVKTALSEVR) form a coiled coil. Residues 191-211 (QWFTGFVGVVSSVVLIILFYF) traverse the membrane as a helical segment.

Belongs to the CCDC90 family.

The protein localises to the mitochondrion. The protein resides in the membrane. This is an uncharacterized protein from Schizosaccharomyces pombe (strain 972 / ATCC 24843) (Fission yeast).